The chain runs to 431 residues: MTKSAELFAKAQDKIPGGVNSPVRAFAGVGGSPIFVERADGPLIFDADGKAYIDYVGSWGPMILGHNHAAIREAVISAAQRGLSFGAPTETEITMAELVSELVPSMEQVRMVSSGTEATMSAIRLARGYTGRDKIMKFEGCYHGHADSLLVKAGSGALTLGQPSSPGVPADFAKYTLTATFNDLDSVRELFAVNKGEIACIIVEPVAGNMNCIPPVEGFHEGLRQICDEEGALLIFDEVMTGFRVAENCAQGYYNIKPDLTTLGKVIGGGMPVGAFGGRKEVMQYIAPTGPVYQAGTLSGNPVAMAAGFACLKVLTEEGNEKRLADTTRHLANGFKELANKHGIPMVVNQVGGMFGFFFTDQETVTSYADVAKCDIERFKRFFHLMLKKGVYLAPSAFEASFTSLAHGPKEIEATLEAADQCFAIIASEAK.

K265 is modified (N6-(pyridoxal phosphate)lysine).

The protein belongs to the class-III pyridoxal-phosphate-dependent aminotransferase family. HemL subfamily. In terms of assembly, homodimer. Pyridoxal 5'-phosphate serves as cofactor.

The protein localises to the cytoplasm. The enzyme catalyses (S)-4-amino-5-oxopentanoate = 5-aminolevulinate. It participates in porphyrin-containing compound metabolism; protoporphyrin-IX biosynthesis; 5-aminolevulinate from L-glutamyl-tRNA(Glu): step 2/2. The sequence is that of Glutamate-1-semialdehyde 2,1-aminomutase from Aliivibrio fischeri (strain ATCC 700601 / ES114) (Vibrio fischeri).